The sequence spans 331 residues: Isopenicillin N synthase (331 aa).

Isopenicillin N-binding residues include Arg87, Tyr91, Ser183, and Tyr189. N-[(5S)-5-amino-5-carboxypentanoyl]-L-cysteinyl-D-valine contacts are provided by Arg87, Tyr91, Ser183, Tyr189, His214, and Asp216. In terms of domain architecture, Fe2OG dioxygenase spans 176–288; it reads KPDDTLASVV…RQSLPFFVNL (113 aa). Fe(2+) contacts are provided by His214, Asp216, and His270. Arg279 is a 2-oxoglutarate binding site. Position 281 (Ser281) interacts with isopenicillin N. Ser281 lines the N-[(5S)-5-amino-5-carboxypentanoyl]-L-cysteinyl-D-valine pocket.

It belongs to the iron/ascorbate-dependent oxidoreductase family. As to quaternary structure, monomer. The cofactor is Fe(2+).

Its subcellular location is the cytoplasm. It is found in the cytosol. The enzyme catalyses N-[(5S)-5-amino-5-carboxypentanoyl]-L-cysteinyl-D-valine + O2 = isopenicillin N + 2 H2O. It participates in antibiotic biosynthesis; penicillin G biosynthesis; penicillin G from L-alpha-aminoadipate and L-cysteine and L-valine: step 2/3. Functionally, isopenicillin N synthase; part of the gene cluster that mediates the biosynthesis of penicillin, the world's most important antibiotic. IpnA catalyzes the cyclization of the tripeptide N-[(5S)-5-amino-5-carboxypentanoyl]-L-cysteinyl-D-valine (LLD-ACV or ACV) to form isopenicillin N (IPN) that contains the beta-lactam nucleus. The penicillin biosynthesis occurs via 3 enzymatic steps, the first corresponding to the production of the tripeptide N-[(5S)-5-amino-5-carboxypentanoyl]-L-cysteinyl-D-valine (LLD-ACV or ACV) by the NRPS acvA. The tripeptide ACV is then cyclized to isopenicillin N (IPN) by the isopenicillin N synthase ipnA that forms the beta-lactam nucleus. Finally, the alpha-aminoadipyl side chain is exchanged for phenylacetic acid by the isopenicillin N acyltransferase penDE to yield penicillin in the peroxisomal matrix. The polypeptide is Isopenicillin N synthase (Emericella nidulans (strain FGSC A4 / ATCC 38163 / CBS 112.46 / NRRL 194 / M139) (Aspergillus nidulans)).